The chain runs to 622 residues: MCGLQFSLPCLRLFLVVTCYLLLLLHKEILGCSSVCQLCTGRQINCRNLGLSSIPKNFPESTVFLYLTGNNISYINESELTGLHSLVALYLDNSNILYVYPKAFVQLRHLYFLFLNNNFIKRLDPGIFKGLLNLRNLYLQYNQVSFVPRGVFNDLVSVQYLNLQRNRLTVLGSGTFVGMVALRILDLSNNNILRISESGFQHLENLACLYLGSNNLTKVPSNAFEVLKSLRRLSLSHNPIEAIQPFAFKGLANLEYLLLKNSRIRNVTRDGFSGINNLKHLILSHNDLENLNSDTFSLLKNLIYLKLDRNRIISIDNDTFENMGASLKILNLSFNNLTALHPRVLKPLSSLIHLQANSNPWECNCKLLGLRDWLASSAITLNIYCQNPPSMRGRALRYINITNCVTSSINVSRAWAVVKSPHIHHKTTALMMAWHKVTTNGSPLENTETENITFWERIPTSPAGRFFQENAFGNPLETTAVLPVQIQLTTSVTLNLEKNSALPNDAASMSGKTSLICTQEVEKLNEAFDILLAFFILACVLIIFLIYKVVQFKQKLKASENSRENRLEYYSFYQSARYNVTASICNTSPNSLESPGLEQIRLHKQIVPENEAQVILFEHSAL.

The signal sequence occupies residues 1 to 31 (MCGLQFSLPCLRLFLVVTCYLLLLLHKEILG). The 29-residue stretch at 32 to 60 (CSSVCQLCTGRQINCRNLGLSSIPKNFPE) folds into the LRRNT domain. 12 LRR repeats span residues 61–82 (STVF…ELTG), 85–106 (SLVA…AFVQ), 109–130 (HLYF…IFKG), 133–154 (NLRN…VFND), 157–178 (SVQY…TFVG), 181–202 (ALRI…GFQH), 205–226 (NLAC…AFEV), 229–250 (SLRR…AFKG), 253–274 (NLEY…GFSG), 277–298 (NLKH…TFSL), 301–322 (NLIY…TFEN), and 326–347 (SLKI…VLKP). N-linked (GlcNAc...) asparagine glycosylation occurs at Asn215. The N-linked (GlcNAc...) asparagine glycan is linked to Asn266. N-linked (GlcNAc...) asparagine glycosylation is found at Asn331 and Asn400. In terms of domain architecture, LRRCT spans 359-406 (NPWECNCKLLGLRDWLASSAITLNIYCQNPPSMRGRALRYINITNCVT). Residues 527 to 547 (AFDILLAFFILACVLIIFLIY) traverse the membrane as a helical segment.

Expressed at low levels in many tissues, including smooth muscle, brain, uterus, pancreas, cartilage, adipose, spleen and testis.

Its subcellular location is the membrane. Its function is as follows. Renders cells highly sensitive to the activation by cytokines and lipopolysaccharide (LPS). The chain is Leucine-rich repeat-containing protein 70 (LRRC70) from Homo sapiens (Human).